The primary structure comprises 344 residues: Laforin, isoform 9 (344 aa).

Disordered stretches follow at residues 1–44 (MHPK…PGPG), 58–134 (GGGA…PRGH), 158–188 (PAPG…RRAS), and 320–344 (SLKK…QCAT). The span at 77–88 (AARAGALGAARC) shows a compositional bias: low complexity. Over residues 101-131 (RGPGPAGAGPVARGGGAGGRGGGAGRGGAGP) the composition is skewed to gly residues. The span at 179–188 (RPRRPRRRAS) shows a compositional bias: basic residues.

In terms of assembly, interacts with isoform 1 and isoform 2.

Its subcellular location is the nucleus. This is Laforin, isoform 9 from Homo sapiens (Human).